The sequence spans 198 residues: Protein GrpE (198 aa).

Belongs to the GrpE family. In terms of assembly, homodimer.

The protein resides in the cytoplasm. Its function is as follows. Participates actively in the response to hyperosmotic and heat shock by preventing the aggregation of stress-denatured proteins, in association with DnaK and GrpE. It is the nucleotide exchange factor for DnaK and may function as a thermosensor. Unfolded proteins bind initially to DnaJ; upon interaction with the DnaJ-bound protein, DnaK hydrolyzes its bound ATP, resulting in the formation of a stable complex. GrpE releases ADP from DnaK; ATP binding to DnaK triggers the release of the substrate protein, thus completing the reaction cycle. Several rounds of ATP-dependent interactions between DnaJ, DnaK and GrpE are required for fully efficient folding. This chain is Protein GrpE, found in Lysinibacillus sphaericus (Bacillus sphaericus).